The chain runs to 867 residues: Glucans biosynthesis glucosyltransferase H (867 aa).

The tract at residues 71–91 (DDEGRTQLETMPKATRSSISP) is disordered. The next 6 membrane-spanning stretches (helical) occupy residues 139-156 (YILL…TWYM), 194-216 (ILIL…LMGF), 518-540 (VMSY…LQVV), 568-590 (IALL…LLIW), 603-625 (VTIS…MLFH), and 680-702 (FLFW…VFSS).

The protein belongs to the glycosyltransferase 2 family. OpgH subfamily.

The protein resides in the cell inner membrane. Its pathway is glycan metabolism; osmoregulated periplasmic glucan (OPG) biosynthesis. Involved in the biosynthesis of osmoregulated periplasmic glucans (OPGs). In Nitrosomonas europaea (strain ATCC 19718 / CIP 103999 / KCTC 2705 / NBRC 14298), this protein is Glucans biosynthesis glucosyltransferase H.